We begin with the raw amino-acid sequence, 630 residues long: Heat shock cognate 70 kDa protein 3 (630 aa).

Residues phenylalanine 611–aspartate 630 form a disordered region. Positions asparagine 615–aspartate 630 are enriched in low complexity.

It belongs to the heat shock protein 70 family.

Functionally, may function in protein folding and assembly, and disassembly of protein complexes. This Dictyostelium discoideum (Social amoeba) protein is Heat shock cognate 70 kDa protein 3.